The following is a 137-amino-acid chain: Large ribosomal subunit protein uL16 (137 aa).

This sequence belongs to the universal ribosomal protein uL16 family. In terms of assembly, part of the 50S ribosomal subunit.

In terms of biological role, binds 23S rRNA and is also seen to make contacts with the A and possibly P site tRNAs. This chain is Large ribosomal subunit protein uL16, found in Streptococcus sanguinis (strain SK36).